The chain runs to 437 residues: Adenylosuccinate synthetase (437 aa).

GTP-binding positions include 12–18 and 40–42; these read GDEGKGK and GHT. Asp-13 (proton acceptor) is an active-site residue. Positions 13 and 40 each coordinate Mg(2+). Residues 13-16, 38-41, Thr-128, Arg-142, Gln-223, Thr-238, and Arg-302 contribute to the IMP site; these read DEGK and NAGH. His-41 acts as the Proton donor in catalysis. A substrate-binding site is contributed by 298-304; sequence TTTGRRR. Residues Arg-304, 330–332, and 412–414 each bind GTP; these read KLD and SLG.

It belongs to the adenylosuccinate synthetase family. In terms of assembly, homodimer. Requires Mg(2+) as cofactor.

The protein localises to the cytoplasm. The enzyme catalyses IMP + L-aspartate + GTP = N(6)-(1,2-dicarboxyethyl)-AMP + GDP + phosphate + 2 H(+). The protein operates within purine metabolism; AMP biosynthesis via de novo pathway; AMP from IMP: step 1/2. Functionally, plays an important role in the de novo pathway of purine nucleotide biosynthesis. Catalyzes the first committed step in the biosynthesis of AMP from IMP. This Prochlorococcus marinus (strain NATL1A) protein is Adenylosuccinate synthetase.